A 440-amino-acid polypeptide reads, in one-letter code: Protein eva-1 homolog C (440 aa).

Residues 1-13 are compositionally biased toward pro residues; it reads MLLPGHPRPPPAP. The tract at residues 1–23 is disordered; that stretch reads MLLPGHPRPPPAPQSAQNQGLRR. The first 48 residues, 1–48, serve as a signal peptide directing secretion; it reads MLLPGHPRPPPAPQSAQNQGLRRQVEPPGQLLRLFYCTVLVCSKETSA. At 49-321 the chain is on the extracellular side; it reads LTDFSGYLTK…AYIRAHPERA (273 aa). N-linked (GlcNAc...) asparagine glycosylation is found at asparagine 62, asparagine 109, and asparagine 165. One can recognise an SUEL-type lectin 1 domain in the interval 67–159; it reads ACDGDYLNLQ…KYLLVSFKCQ (93 aa). In terms of domain architecture, SUEL-type lectin 2 spans 168–260; the sequence is VCENQELKLH…KYLTVAYACV (93 aa). Residues 322-342 form a helical membrane-spanning segment; that stretch reads ALLFMSSVCIGLLLTLCALVI. The Cytoplasmic portion of the chain corresponds to 343–440; sequence RVSCTKDFRE…SLPRNVGHFY (98 aa). Positions 364-384 are disordered; sequence SDKAEEDSEEDLEEEDSSDSQ. Acidic residues predominate over residues 367 to 381; sequence AEEDSEEDLEEEDSS.

Belongs to the EVA1 family. Ubiquitous.

It is found in the cell membrane. In terms of biological role, binds heparin. This chain is Protein eva-1 homolog C (Eva1c), found in Mus musculus (Mouse).